We begin with the raw amino-acid sequence, 96 residues long: Protein FPV129 (96 aa).

2 consecutive transmembrane segments (helical) span residues 36-56 (IILD…FVII) and 71-91 (LFLL…LYIV).

It belongs to the chordopoxvirinae L2 family.

The protein localises to the virion membrane. It is found in the host cytoplasm. Early protein involved in early virion morphogenesis. Participates in the formation and elongation of crescent-shaped membrane precursors of immature virions in cytoplasmic factories. The sequence is that of Protein FPV129 from Vertebrata (FPV).